Reading from the N-terminus, the 410-residue chain is Transcription factor Dp-1 (410 aa).

Lysine 3 bears the N6-acetyllysine mark. At serine 23 the chain carries Phosphoserine. Polar residues predominate over residues 73 to 100 (SNTLVVGSPHTPSTHFASQNQPSDSSPW). Residues 73–116 (SNTLVVGSPHTPSTHFASQNQPSDSSPWSAGKRNRKGEKNGKGL) are disordered. Residues 104-116 (KRNRKGEKNGKGL) show a composition bias toward basic residues. The segment at 105 to 127 (RNRKGEKNGKGLRHFSMKVCEKV) is interaction with CEBPA. Residues 113–195 (GKGLRHFSMK…KKEIKWIGLP (83 aa)) mediate DNA binding. A DEF box motif is present at residues 161 to 195 (DQKNIRRRVYDALNVLMAMNIISKEKKEIKWIGLP). The segment at 204–277 (NLEVERQRRL…KKTVIDCSIS (74 aa)) is dimerization. The tract at residues 211–327 (RRLERIKQKQ…DLKMARSLVP (117 aa)) is enhances binding of RB protein to E2F. The segment at 214–246 (ERIKQKQSQLQELILQQIAFKNLVQRNRHAEQQ) is DCB1. Residues 259–315 (LPFIIVNTSKKTVIDCSISNDKFEYLFNFDNTFEIHDDIEVLKRMGMACGLESGSCS) are DCB2. The segment at 370-410 (GMLATSSNGSQYSGSRVETPVSYVGEDDEEDDDFNENDEDD) is disordered. Polar residues predominate over residues 373-385 (ATSSNGSQYSGSR). The segment covering 394–410 (GEDDEEDDDFNENDEDD) has biased composition (acidic residues).

This sequence belongs to the E2F/DP family. As to quaternary structure, component of the E2F:DP transcription factor complex. Forms heterodimers with E2F family members. The complex can interact with hypophosphorylated retinoblastoma protein RB1 and related proteins (RBL1 and RBL2) that inhibit the E2F transactivation domain. This repression involves recruitment of histone deacetylase (HDAC). During the cell cycle, from mid-to-late G1 phase, RB family members become phosphorylated, detach from the DRTF1/E2F complex to render E2F transcriptionally active. Viral oncoproteins, notably E1A, T-antigen and HPV E7, are capable of sequestering RB protein, thus releasing the active complex. Part of the E2F6.com-1 complex in G0 phase is composed of E2F6, MGA, MAX, TFDP1, CBX3, BAT8, EUHMTASE1, RING1, RNF2, MBLR, L3MBTL2 YAF2. Component of the DREAM complex (also named LINC complex) at least composed of E2F4, E2F5, LIN9, LIN37, LIN52, LIN54, MYBL1, MYBL2, RBL1, RBL2, RBBP4, TFDP1 and TFDP2. The complex exists in quiescent cells where it represses cell cycle-dependent genes. It dissociates in S phase when LIN9, LIN37, LIN52 and LIN54 form a subcomplex that binds to MYBL2. The complex TFDP1:E2F1 interacts with CEBPA; the interaction prevents CEBPA binding to target gene promoters and represses its transcriptional activity. Phosphorylation by E2F1-bound cyclin A-CDK2, in the S phase, inhibits E2F-mediated DNA binding and transactivation. Post-translationally, ubiquitinated by the BCR(KBTBD5) complex, leading to its subsequent degradation. Highest levels in muscle. Also expressed in brain, placenta, liver and kidney. Lower levels in lung and pancreas. Not detected in heart.

Its subcellular location is the nucleus. The protein resides in the cytoplasm. Functionally, can stimulate E2F-dependent transcription. Binds DNA cooperatively with E2F family members through the E2 recognition site, 5'-TTTC[CG]CGC-3', found in the promoter region of a number of genes whose products are involved in cell cycle regulation or in DNA replication. The E2F1:DP complex appears to mediate both cell proliferation and apoptosis. Blocks adipocyte differentiation by repressing CEBPA binding to its target gene promoters. The polypeptide is Transcription factor Dp-1 (TFDP1) (Homo sapiens (Human)).